Here is a 214-residue protein sequence, read N- to C-terminus: Outer-membrane lipoprotein LolB (214 aa).

The first 25 residues, 1-25, serve as a signal peptide directing secretion; it reads MNNLKRLTKTIFSCFTLSALLLLAG. Cys-26 carries N-palmitoyl cysteine lipidation. Residue Cys-26 is the site of S-diacylglycerol cysteine attachment. A compositionally biased stretch (polar residues) spans 143-160; the sequence is QVIESDSQGKPKQLTNTQ. Positions 143–163 are disordered; sequence QVIESDSQGKPKQLTNTQTPP.

This sequence belongs to the LolB family. Monomer.

It localises to the cell outer membrane. Plays a critical role in the incorporation of lipoproteins in the outer membrane after they are released by the LolA protein. The protein is Outer-membrane lipoprotein LolB of Shewanella baltica (strain OS223).